A 198-amino-acid chain; its full sequence is Thymidine kinase (198 aa).

Residues 15–22 and 87–90 each bind ATP; these read GCMFSGKT and DEAQ. Catalysis depends on glutamate 88, which acts as the Proton acceptor. Zn(2+) contacts are provided by cysteine 144, cysteine 147, cysteine 182, and histidine 185.

The protein belongs to the thymidine kinase family. In terms of assembly, homotetramer.

Its subcellular location is the cytoplasm. It catalyses the reaction thymidine + ATP = dTMP + ADP + H(+). The protein is Thymidine kinase of Coprothermobacter proteolyticus (strain ATCC 35245 / DSM 5265 / OCM 4 / BT).